A 136-amino-acid chain; its full sequence is Aspartate 1-decarboxylase (136 aa).

Ser-25 serves as the catalytic Schiff-base intermediate with substrate; via pyruvic acid. Position 25 is a pyruvic acid (Ser) (Ser-25). Thr-57 contributes to the substrate binding site. Tyr-58 (proton donor) is an active-site residue. Residue 73-75 (GAA) coordinates substrate.

It belongs to the PanD family. In terms of assembly, heterooctamer of four alpha and four beta subunits. It depends on pyruvate as a cofactor. In terms of processing, is synthesized initially as an inactive proenzyme, which is activated by self-cleavage at a specific serine bond to produce a beta-subunit with a hydroxyl group at its C-terminus and an alpha-subunit with a pyruvoyl group at its N-terminus.

The protein resides in the cytoplasm. The enzyme catalyses L-aspartate + H(+) = beta-alanine + CO2. It participates in cofactor biosynthesis; (R)-pantothenate biosynthesis; beta-alanine from L-aspartate: step 1/1. Functionally, catalyzes the pyruvoyl-dependent decarboxylation of aspartate to produce beta-alanine. In Mycolicibacterium smegmatis (strain ATCC 700084 / mc(2)155) (Mycobacterium smegmatis), this protein is Aspartate 1-decarboxylase.